The sequence spans 174 residues: Recombination protein RecR (174 aa).

The C4-type zinc-finger motif lies at 30 to 45 (CNACRTFTEEEECTIC). The Toprim domain maps to 54 to 149 (GQLCIVEMPE…KVTRIAHGIP (96 aa)).

This sequence belongs to the RecR family.

May play a role in DNA repair. It seems to be involved in an RecBC-independent recombinational process of DNA repair. It may act with RecF and RecO. This chain is Recombination protein RecR, found in Haemophilus ducreyi (strain 35000HP / ATCC 700724).